A 579-amino-acid polypeptide reads, in one-letter code: 6-deoxy-6-sulfo-D-gluconate dehydratase (579 aa).

Residues C59, C127, and C200 each coordinate [4Fe-4S] cluster.

It belongs to the IlvD/Edd family. In terms of assembly, homodimer. The cofactor is [4Fe-4S] cluster.

The catalysed reaction is 6-deoxy-6-sulfo-D-gluconate = 2-dehydro-3,6-dideoxy-6-sulfo-D-gluconate + H2O. Catalyzes the dehydration of 6-deoxy-6-sulfo-D-gluconate to 2-dehydro-3,6-dideoxy-6-sulfo-D-gluconate. Is involved in a degradation pathway of sulfoquinovose (SQ) that allows P.putida SQ1 to use SQ as the sole carbon and energy source for growth. The protein is 6-deoxy-6-sulfo-D-gluconate dehydratase of Pseudomonas putida (Arthrobacter siderocapsulatus).